Consider the following 566-residue polypeptide: MTTREYDYIICGAGSAGNVLATRLTEDPNVTVLLLEAGGPDYRFDFRTQMPAALAYPLQGRRYNWAYETDPEPHMDNRRMECGRGKGLGGSSLINGMCYIRGNALDYDNWSTHQGLERWTYLDCLPYFRKAETRDVGPNDYHGGDGPVSVTTSKPGANPLFEAMVEAGVQAGYPRTDDLNGYQQEGFGPMDRTVTPKGRRASTARGYLDQAKTRPNLEIVTHALADRILFDGKRASGVAYLRGSERATAHARREVLVCSGAIASPQLLQRSGVGPGAWLKELDIPIVLDLPGVGQNLQDHLEMYIQYECKEPVSLYPALKWWNQPKIGLEWMLNGTGLGASNHFEAGGFIRTRDDDPWPNIQYHFLPVAINYNGSNAIEMHGFQAHVGSMRSPSRGRVKLRSRDPNDHPSILFNYMAEALDWREFRDAIRATREIMRQPALDRYRGRELNPGADCRSDKELDTFVRARAETAFHPSCSCKMGYDDMAVVDDEGRVHGLDGLRVVDASIMPIITTGNLNAPTIMIAEKIADRIRGREPLARANVAYYVANGAPARNVAKAVRQPETA.

7 to 36 (DYIICGAGSAGNVLATRLTEDPNVTVLLLE) serves as a coordination point for FAD. The segment at 185–204 (EGFGPMDRTVTPKGRRASTA) is disordered. Catalysis depends on H474, which acts as the Proton acceptor.

Belongs to the GMC oxidoreductase family. The cofactor is FAD.

It catalyses the reaction choline + A = betaine aldehyde + AH2. It carries out the reaction betaine aldehyde + NAD(+) + H2O = glycine betaine + NADH + 2 H(+). It functions in the pathway amine and polyamine biosynthesis; betaine biosynthesis via choline pathway; betaine aldehyde from choline (cytochrome c reductase route): step 1/1. Involved in the biosynthesis of the osmoprotectant glycine betaine. Catalyzes the oxidation of choline to betaine aldehyde and betaine aldehyde to glycine betaine at the same rate. The sequence is that of Oxygen-dependent choline dehydrogenase from Burkholderia vietnamiensis (strain G4 / LMG 22486) (Burkholderia cepacia (strain R1808)).